We begin with the raw amino-acid sequence, 227 residues long: Cytochrome c oxidase subunit 2 (227 aa).

The Mitochondrial intermembrane portion of the chain corresponds to 1–14 (MANHSQLGFQDASS). Residues 15-45 (PIMEELVEFHDHALMVALAICSLVLYLLTLM) form a helical membrane-spanning segment. At 46-58 (LMEKLSSNTVDAQ) the chain is on the mitochondrial matrix side. The chain crosses the membrane as a helical span at residues 59-86 (EVELIWTILPAIVLVLLALPSLQILYMM). Residues 87-227 (DEIDEPDLTL…FEAWSSLLSS (141 aa)) are Mitochondrial intermembrane-facing. Cu cation contacts are provided by H160, C195, E197, C199, H203, and M206. Residue E197 participates in Mg(2+) binding.

It belongs to the cytochrome c oxidase subunit 2 family. In terms of assembly, component of the cytochrome c oxidase (complex IV, CIV), a multisubunit enzyme composed of 14 subunits. The complex is composed of a catalytic core of 3 subunits MT-CO1, MT-CO2 and MT-CO3, encoded in the mitochondrial DNA, and 11 supernumerary subunits COX4I, COX5A, COX5B, COX6A, COX6B, COX6C, COX7A, COX7B, COX7C, COX8 and NDUFA4, which are encoded in the nuclear genome. The complex exists as a monomer or a dimer and forms supercomplexes (SCs) in the inner mitochondrial membrane with NADH-ubiquinone oxidoreductase (complex I, CI) and ubiquinol-cytochrome c oxidoreductase (cytochrome b-c1 complex, complex III, CIII), resulting in different assemblies (supercomplex SCI(1)III(2)IV(1) and megacomplex MCI(2)III(2)IV(2)). Found in a complex with TMEM177, COA6, COX18, COX20, SCO1 and SCO2. Interacts with TMEM177 in a COX20-dependent manner. Interacts with COX20. Interacts with COX16. Cu cation serves as cofactor.

The protein localises to the mitochondrion inner membrane. The catalysed reaction is 4 Fe(II)-[cytochrome c] + O2 + 8 H(+)(in) = 4 Fe(III)-[cytochrome c] + 2 H2O + 4 H(+)(out). Functionally, component of the cytochrome c oxidase, the last enzyme in the mitochondrial electron transport chain which drives oxidative phosphorylation. The respiratory chain contains 3 multisubunit complexes succinate dehydrogenase (complex II, CII), ubiquinol-cytochrome c oxidoreductase (cytochrome b-c1 complex, complex III, CIII) and cytochrome c oxidase (complex IV, CIV), that cooperate to transfer electrons derived from NADH and succinate to molecular oxygen, creating an electrochemical gradient over the inner membrane that drives transmembrane transport and the ATP synthase. Cytochrome c oxidase is the component of the respiratory chain that catalyzes the reduction of oxygen to water. Electrons originating from reduced cytochrome c in the intermembrane space (IMS) are transferred via the dinuclear copper A center (CU(A)) of subunit 2 and heme A of subunit 1 to the active site in subunit 1, a binuclear center (BNC) formed by heme A3 and copper B (CU(B)). The BNC reduces molecular oxygen to 2 water molecules using 4 electrons from cytochrome c in the IMS and 4 protons from the mitochondrial matrix. The polypeptide is Cytochrome c oxidase subunit 2 (MT-CO2) (Gallus gallus (Chicken)).